The following is a 425-amino-acid chain: Pectate lyase L (425 aa).

Positions 1-25 (MKYLNCFISTGLAAFFLVNSTSVLA) are cleaved as a signal peptide. Cys-28 and Cys-114 are disulfide-bonded. Ca(2+)-binding residues include Asp-209, Asp-233, Asp-234, and Asp-237. The Proton acceptor role is filled by Lys-273. Residues Asn-402, Ser-413, Ala-416, Asp-418, and Glu-423 each coordinate Ca(2+).

The protein belongs to the polysaccharide lyase 9 family. Ca(2+) serves as cofactor.

It is found in the secreted. It catalyses the reaction Eliminative cleavage of (1-&gt;4)-alpha-D-galacturonan to give oligosaccharides with 4-deoxy-alpha-D-galact-4-enuronosyl groups at their non-reducing ends.. It participates in glycan metabolism; pectin degradation; 2-dehydro-3-deoxy-D-gluconate from pectin: step 2/5. Its function is as follows. Presents an endo-cleaving activity on polygalacturonate or partially methylated pectin. Is effective in the maceration of plant tissue, and has an important role in soft-rot disease. Is 280-fold less active against polygalacturonate than the major pectate lyase PelB. When assayed on polygalacturonate, PelL releases oligogalacturonates of different sizes; upon prolonged incubation, PelL degrades the primary products to unsaturated tetramer and pentamer in addition to unsaturated dimer and trimer. When assayed on oligogalacturonates (degrees of polymerization of 2 to 8), it preferentially forms unsaturated tetramer, and displays the highest activity on the octamer. The protein is Pectate lyase L (pelL) of Dickeya dadantii (strain 3937) (Erwinia chrysanthemi (strain 3937)).